Reading from the N-terminus, the 597-residue chain is Adenine deaminase 2 (597 aa).

This sequence belongs to the metallo-dependent hydrolases superfamily. Adenine deaminase family. Requires Mn(2+) as cofactor.

The catalysed reaction is adenine + H2O + H(+) = hypoxanthine + NH4(+). This is Adenine deaminase 2 from Agrobacterium fabrum (strain C58 / ATCC 33970) (Agrobacterium tumefaciens (strain C58)).